The primary structure comprises 524 residues: Cytochrome P450 monooxygenase ATR4 (524 aa).

Residues 13–36 (IITYLDSLTWVGMALPLFSLCWAI) traverse the membrane as a helical segment. 3 N-linked (GlcNAc...) asparagine glycosylation sites follow: Asn291, Asn444, and Asn454.

It belongs to the cytochrome P450 family. Heme serves as cofactor.

The protein localises to the membrane. It participates in mycotoxin biosynthesis. Functionally, cytochrome P450 monooxygenase; part of the core atranone cluster (CAC) which products are predicted to catalyze most or all steps of mycotoxin atranone synthesis, starting from geranylgeranyl pyrophosphate (GGPP). The initial cyclization of GGPP to dolabellane is probably performed by the terpene cyclase ATR13. The Baeyer-Villiger oxidation near the end of the atranone synthesis, which converts atranones D and E to atranones F and G is predicted to be catalyzed by the monooxygenase ATR8. Of the CAC's other predicted gene products, the reducing PKS ATR6 might synthesize a polyketide chain. This polyketide is probably transferred onto the atranone backbone by the polyketide transferase ATR5. Other predicted CAC products include 4 oxygenases (ATR2, ATR3, ATR4, and ATR14), 3 short-chain reductases (ATR7, ATR9, and ATR10), and a methyltransferase (ATR12). These may all be involved in the various steps of atranone biosynthesis, although their specific roles must await experimental determination. The chain is Cytochrome P450 monooxygenase ATR4 from Stachybotrys chlorohalonatus (strain IBT 40285).